Consider the following 48-residue polypeptide: DNA-directed RNA polymerase subunit Rpo12 (48 aa).

Zn(2+) is bound by residues cysteine 9, cysteine 26, and cysteine 29.

The protein belongs to the archaeal Rpo12/eukaryotic RPC10 RNA polymerase subunit family. Part of the RNA polymerase complex. Zn(2+) is required as a cofactor.

It localises to the cytoplasm. The enzyme catalyses RNA(n) + a ribonucleoside 5'-triphosphate = RNA(n+1) + diphosphate. Its function is as follows. DNA-dependent RNA polymerase (RNAP) catalyzes the transcription of DNA into RNA using the four ribonucleoside triphosphates as substrates. In Sulfurisphaera tokodaii (strain DSM 16993 / JCM 10545 / NBRC 100140 / 7) (Sulfolobus tokodaii), this protein is DNA-directed RNA polymerase subunit Rpo12.